The primary structure comprises 310 residues: MSVTVKMLVDKVKLDVIYGDDDLLSKEITTSDISRPGLEMTGYFDYYSPERLQLLGMKEWSYLTKMTSHNRRHVLREMIKPETPAIIVARNLAIPEEMISAAKEKGIAILQSHVPTSRLSGEMSWYLDSCLAERTSVHGVLMDIYGMGVLIQGDSGIGKSETGLELVKRGHRLVADDRVDVFAKDEETLWGEPAEILRHLLEIRGVGIIDVMSLYGASAVKDSSQVQLAIYLENYESGKVFDRLGNGNEELELSGVKIPRLRIPVQTGRNMSVVIEAAAMNYRAKQMGFDATKTFEERLTQLITKNEGNQ.

Catalysis depends on residues H138 and K159. An ATP-binding site is contributed by 153 to 160 (GDSGIGKS). Residue S160 coordinates Mg(2+). D177 acts as the Proton acceptor; for phosphorylation activity. Proton donor; for dephosphorylation activity in catalysis. The segment at 201-210 (LEIRGVGIID) is important for the catalytic mechanism of both phosphorylation and dephosphorylation. Position 202 (E202) interacts with Mg(2+). R243 is an active-site residue. Positions 264-269 (PVQTGR) are important for the catalytic mechanism of dephosphorylation.

It belongs to the HPrK/P family. In terms of assembly, homohexamer. Mg(2+) is required as a cofactor. Requires Mn(2+) as cofactor.

It catalyses the reaction [HPr protein]-L-serine + ATP = [HPr protein]-O-phospho-L-serine + ADP + H(+). It carries out the reaction [HPr protein]-O-phospho-L-serine + phosphate + H(+) = [HPr protein]-L-serine + diphosphate. With respect to regulation, kinase activity is inhibited by inorganic phosphate (Pi). In contrast to many other bacteria, neither kinase activity nor phosphorylase activity is affected by fructose 1,6-bisphosphate (FBP). Catalyzes the ATP- as well as probably the pyrophosphate-dependent phosphorylation of 'Ser-46' in HPr, a phosphocarrier protein of the phosphoenolpyruvate-dependent sugar phosphotransferase system (PTS). HprK/P also catalyzes the pyrophosphate-producing, inorganic phosphate-dependent dephosphorylation (phosphorolysis) of seryl-phosphorylated HPr (P-Ser-HPr). The two antagonistic activities of HprK/P are regulated by several intracellular metabolites, which change their concentration in response to the absence or presence of rapidly metabolisable carbon sources (glucose, fructose, etc.) in the growth medium. Therefore, by controlling the phosphorylation state of HPr, the HPrK/P is a sensor enzyme that plays a major role in the regulation of carbon metabolism and sugar transport: it probably mediates carbon catabolite repression (CCR), and regulates PTS-catalyzed carbohydrate uptake and inducer exclusion. This Streptococcus equinus (Streptococcus bovis) protein is HPr kinase/phosphorylase (hprK).